The chain runs to 422 residues: Proline--tRNA ligase (422 aa).

The protein belongs to the class-II aminoacyl-tRNA synthetase family. ProS type 2 subfamily. Homodimer.

It is found in the cytoplasm. It carries out the reaction tRNA(Pro) + L-proline + ATP = L-prolyl-tRNA(Pro) + AMP + diphosphate. Functionally, catalyzes the attachment of proline to tRNA(Pro) in a two-step reaction: proline is first activated by ATP to form Pro-AMP and then transferred to the acceptor end of tRNA(Pro). This Wolbachia sp. subsp. Drosophila simulans (strain wRi) protein is Proline--tRNA ligase.